The primary structure comprises 210 residues: Large ribosomal subunit protein bL25 (210 aa).

Belongs to the bacterial ribosomal protein bL25 family. CTC subfamily. Part of the 50S ribosomal subunit; part of the 5S rRNA/L5/L18/L25 subcomplex. Contacts the 5S rRNA. Binds to the 5S rRNA independently of L5 and L18.

In terms of biological role, this is one of the proteins that binds to the 5S RNA in the ribosome where it forms part of the central protuberance. This is Large ribosomal subunit protein bL25 from Herminiimonas arsenicoxydans.